The chain runs to 780 residues: Tyrosine-protein phosphatase non-receptor type 12 (780 aa).

Residue Met-1 is modified to N-acetylmethionine. Ser-19 bears the Phosphoserine mark. Residues 28 to 293 (FARDFMRLRR…ELVHRAIAQL (266 aa)) enclose the Tyrosine-protein phosphatase domain. Substrate contacts are provided by residues Arg-36, 63–67 (RYKDI), Asp-199, 231–237 (CSAGCGR), and Gln-278. Cys-231 acts as the Phosphocysteine intermediate in catalysis. 4 positions are modified to phosphoserine: Ser-332, Ser-435, Ser-449, and Ser-468. Positions 345–438 (VEGDAKEEIL…KLERNLSFEI (94 aa)) are interaction with TGFB1I1. A compositionally biased stretch (polar residues) spans 502-519 (QSNKVSVTPPEESQNSDT). Disordered regions lie at residues 502–639 (QSNK…STES), 657–725 (GTTH…EKCD), and 744–780 (SDKR…SEWT). Phosphothreonine occurs at positions 509 and 519. A compositionally biased stretch (basic and acidic residues) spans 521-533 (PRPDRLPLDEKGH). Composition is skewed to polar residues over residues 552-577 (EGNS…TQVE) and 587-601 (TSPL…TNPL). Ser-567 is modified (phosphoserine). Residue Thr-569 is modified to Phosphothreonine. Phosphoserine occurs at positions 571 and 596. At Thr-598 the chain carries Phosphothreonine. Basic and acidic residues predominate over residues 602–613 (HSDDSDSDERNS). Phosphoserine occurs at positions 603, 606, 608, and 613. A compositionally biased stretch (low complexity) spans 622-639 (TNISTASATVSAATSTES). Phosphoserine occurs at positions 673 and 689. The span at 690–703 (EHNTPVRSEWSELQ) shows a compositional bias: polar residues. Position 693 is a phosphothreonine (Thr-693). Basic and acidic residues-rich tracts occupy residues 704–725 (SQER…EKCD) and 771–780 (GPRDPPSEWT).

It belongs to the protein-tyrosine phosphatase family. Non-receptor class 4 subfamily. Interacts with TGFB1I1. Interacts with PSTPIP1. Interacts with PTK2B/PYK2. Interacts with LPXN. Interacts with SORBS2; this interaction greatly enhances WASF1 dephosphorylation and might mediate partial translocation to focal adhesion sites. Post-translationally, phosphorylated by STK24/MST3 and this results in inhibition of its activity.

It localises to the cytoplasm. Its subcellular location is the cell junction. The protein resides in the focal adhesion. The protein localises to the cell projection. It is found in the podosome. It carries out the reaction O-phospho-L-tyrosyl-[protein] + H2O = L-tyrosyl-[protein] + phosphate. Functionally, dephosphorylates a range of proteins, and thereby regulates cellular signaling cascades. Dephosphorylates cellular tyrosine kinases, such as ERBB2 and PTK2B/PYK2, and thereby regulates signaling via ERBB2 and PTK2B/PYK2. Selectively dephosphorylates ERBB2 phosphorylated at 'Tyr-1112', 'Tyr-1196', and/or 'Tyr-1248'. The chain is Tyrosine-protein phosphatase non-receptor type 12 (PTPN12) from Homo sapiens (Human).